We begin with the raw amino-acid sequence, 284 residues long: Avenin-like b11 (284 aa).

The first 18 residues, 1 to 18 (MKVFILALLALTATTAIA), serve as a signal peptide directing secretion.

This sequence belongs to the prolamin family. In terms of processing, contains disulfide bonds.

Seed storage protein. Might be integrated via inter-chain disulfide bonds within the glutenin polymer. This chain is Avenin-like b11, found in Triticum aestivum (Wheat).